The sequence spans 49 residues: Thymopoietin-1 (49 aa).

Positions 4–47 (LEDPSVLTKEKLKSELVANNVTLPAGEQRKDVYVELYLQHLTAL) constitute an LEM-like domain. Residues 32 to 36 (RKDVY) form a biological activity region.

This sequence belongs to the thymopoietin family.

Hormone of the thymus with pleiotropic actions on prothymocytes, mature T-cells, the nicotinic acetylcholine receptor, and pituitary corticotrophs. This chain is Thymopoietin-1, found in Bos taurus (Bovine).